A 356-amino-acid polypeptide reads, in one-letter code: Biotin synthase (356 aa).

Positions 54–278 (GEVQLCTLLS…VAVARITMPL (225 aa)) constitute a Radical SAM core domain. Positions 69, 73, and 76 each coordinate [4Fe-4S] cluster. 4 residues coordinate [2Fe-2S] cluster: Cys113, Cys144, Cys204, and Arg282.

The protein belongs to the radical SAM superfamily. Biotin synthase family. As to quaternary structure, homodimer. [4Fe-4S] cluster is required as a cofactor. [2Fe-2S] cluster serves as cofactor.

It catalyses the reaction (4R,5S)-dethiobiotin + (sulfur carrier)-SH + 2 reduced [2Fe-2S]-[ferredoxin] + 2 S-adenosyl-L-methionine = (sulfur carrier)-H + biotin + 2 5'-deoxyadenosine + 2 L-methionine + 2 oxidized [2Fe-2S]-[ferredoxin]. Its pathway is cofactor biosynthesis; biotin biosynthesis; biotin from 7,8-diaminononanoate: step 2/2. Catalyzes the conversion of dethiobiotin (DTB) to biotin by the insertion of a sulfur atom into dethiobiotin via a radical-based mechanism. In Novosphingobium aromaticivorans (strain ATCC 700278 / DSM 12444 / CCUG 56034 / CIP 105152 / NBRC 16084 / F199), this protein is Biotin synthase.